The chain runs to 313 residues: Porphobilinogen deaminase (313 aa).

Cys242 carries the post-translational modification S-(dipyrrolylmethanemethyl)cysteine.

The protein belongs to the HMBS family. As to quaternary structure, monomer. Dipyrromethane serves as cofactor.

The enzyme catalyses 4 porphobilinogen + H2O = hydroxymethylbilane + 4 NH4(+). The protein operates within porphyrin-containing compound metabolism; protoporphyrin-IX biosynthesis; coproporphyrinogen-III from 5-aminolevulinate: step 2/4. Functionally, tetrapolymerization of the monopyrrole PBG into the hydroxymethylbilane pre-uroporphyrinogen in several discrete steps. This chain is Porphobilinogen deaminase (hemC), found in Proteus mirabilis.